The following is a 1706-amino-acid chain: MGSKDHAVFFREMTQLILNEMPKAGYSSILNDFVESNFFVIDGDSLLVTCLGVKSFKWGQNLHFFYLVECYLVDLLSNGGQFTIVFFKDAEYAYFDFPELLSLRTALILHLQHNTNIDVQTEFSGCLSQDWKLFLEQHYPYFLIVSEEGLSDLQTYLFNFLIIHSWGMKVNVVLSSGHESDTLRFYAYTMESTDRNQTFSKENETVIQSAYKSLIQHLEEIRVLVLATHFEHLKWNDMMEEAYQTLFLLQHLWSEGSDIQRVLCVTSCSLSLRMYHRVLVHSNCLSLQEVEDFCRLRCLCVAFQLHLPLSQRACSRVITCSWIRNSDSFLKMNKWCEYFILSNLNVFGCWNLNLNHVSDLYDEQLLKNIAFYYEFESTQEPHLNLGDSIRRDYEDLWNVVSHLVKEFNVGKSFPLRTTRRHFLRQEKSVIQEISLEKMPSVGFIPMTSAVIDEFVGDMMKDLPILKSDDPVVPSLFKQKTSDELLHWHAQRLLSDDYDRIKCHVDEQSRDPHVLDFLKKIQDYQQFYGKSLESISTKVIVTQTTRPKEDSSGASGEILQNTKPHQITKKSKKKSFLKEDQNKAQQNDDLLFSIEEEMKNNLHSGIRKLEDYLTSCASNSVKFGVEMLGLIACFKAWKKHCRGEGKISKDLSIAVQMMKRIHSLLERYPEILEAEHHQYIAKCLKYLGFNDLANSLDPTLIGDDKNKKKYSIDIGPARFQLQYMGHYLIRDERKDRDPRVQDFIPNAWQQELLDVVDKNESAVIVAPTSSGKTYASYYCMEKVLRESDVGVVVYVAPAKSLVGQVAATVENRFTKTLPAGRTLCGAFTRDYCHNVLNCQVLITVPECFEILLLAPHRQKWVERIRYVIFDEVHYLGREVGAKFWELLLVIIRCPFLVLSATINNPNLLTKWLQSVKQYWKQADKIMEEKCISEKQADKCLNFLQDHSYKNQSYEVRLVLCGERYNDLEKHICSVKHDDVYFDHFHPCAALTTDIIEKYGFPPDLTLTPQESIQLYDTMAQVWETWPRAQELCPEEFILFKNKIVIKKLDARKYEENLKAELTNWIKNGQVKKVKRVLKNLSPDSLSSSKDMVKMFPLLVEKLRQMDKLPAIFFLFKNDDVGKRAGSVCTFLEKTETKSHPHTECHSYVFAIDEVLEKVRKTQKRITKKNPKKAEKLERKKVYRAEYINFLENLKILEISEDCTYADVKALHTEITRNKDSTLERVLPRVRFTRHGKELKALAQRGIGYHHSSMYFKEKEFVEILFVKGLIRVVTATETLALGIHMPCKSVVFAQDSVYLDALNYRQMSGRAGRRGQDLLGNVYFFDIPLPKIKRLLASSVPELRGQFPLSITLVLRLMLLASKGDDPEDAKAKVLSVLKHSLLSFKRRRAMETLKLYFLFSLQLLIKEDYLNKKGNPKKFAGLASYLHGHEPSNLVFVNFLKRGLFHNLCKPAWKGSQQFSQDVMEKLVLVLANLFGRKYIPAKFQNANLSFSQSKVILAELPEDFKAALYEYNLAVMKDFASFLLIASKSVNMKKEHQLPLSRIKFTGKECEDSQLVSHLMSCKKGRVAISPFVCLSGNTDNDLLRPETINQVILRTVGVSGTQAPLLWPWKLDNRGRRMPLNAYVLNFYKHNCLTRLDQKNGMRMGQLLKCLKDFAFNIQAISDSLSELCENKRDNVVLAFKQLSQTFYEKLQEMQIQMSQNHLE.

The interval 545 to 580 is disordered; sequence RPKEDSSGASGEILQNTKPHQITKKSKKKSFLKEDQ. The segment covering 551-564 has biased composition (polar residues); sequence SGASGEILQNTKPH. The segment covering 565–574 has biased composition (basic residues); it reads QITKKSKKKS. The region spanning 752 to 919 is the Helicase ATP-binding domain; it reads LDVVDKNESA…WLQSVKQYWK (168 aa). 765–772 contacts ATP; that stretch reads APTSSGKT. A DEAH box motif is present at residues 869–872; it reads DEVH. One can recognise a Helicase C-terminal domain in the interval 1205-1354; the sequence is DVKALHTEIT…QFPLSITLVL (150 aa).

The protein belongs to the helicase family.

The enzyme catalyses ATP + H2O = ADP + phosphate + H(+). The protein is Probable ATP-dependent RNA helicase DDX60-like of Homo sapiens (Human).